The primary structure comprises 192 residues: Lipid A acyltransferase PagP (192 aa).

A signal peptide spans 1–26 (MTVVNKSFLTFLVFFCQILFPLNASA). Residues His64, Asp107, and Ser108 contribute to the active site.

It belongs to the lipid A palmitoyltransferase family. As to quaternary structure, homodimer.

The protein resides in the cell outer membrane. It catalyses the reaction a lipid A + a 1,2-diacyl-sn-glycero-3-phosphocholine = a hepta-acyl lipid A + a 2-acyl-sn-glycero-3-phosphocholine. The catalysed reaction is a lipid IVA + a 1,2-diacyl-sn-glycero-3-phosphocholine = a lipid IVB + a 2-acyl-sn-glycero-3-phosphocholine. It carries out the reaction a lipid IIA + a 1,2-diacyl-sn-glycero-3-phosphocholine = a lipid IIB + a 2-acyl-sn-glycero-3-phosphocholine. Its function is as follows. Transfers a fatty acid residue from the sn-1 position of a phospholipid to the N-linked hydroxyfatty acid chain on the proximal unit of lipid A or its precursors. The chain is Lipid A acyltransferase PagP from Cronobacter turicensis (strain DSM 18703 / CCUG 55852 / LMG 23827 / z3032).